We begin with the raw amino-acid sequence, 367 residues long: Apolipoprotein A-V (367 aa).

The N-terminal stretch at 1–20 is a signal peptide; the sequence is MVAVLTWALALLSAFATVQT. S56 is subject to Phosphoserine. The disordered stretch occupies residues 71–90; that stretch reads LGPLSGQGREPPGLPHDPEG.

The protein belongs to the apolipoprotein A1/A4/E family. Interacts with GPIHBP1. Interacts with SORL1; this interaction leads to APOA5 internalization and sorting either to lysosomes and degradation, or to the trans-Golgi network. Post-translationally, phosphorylated by FAM20C in the extracellular medium.

It localises to the secreted. The protein resides in the early endosome. The protein localises to the late endosome. It is found in the golgi apparatus. Its subcellular location is the trans-Golgi network. In terms of biological role, minor apolipoprotein mainly associated with HDL and to a lesser extent with VLDL. May also be associated with chylomicrons. Important determinant of plasma triglyceride (TG) levels by both being a potent stimulator of apo-CII lipoprotein lipase (LPL) TG hydrolysis and an inhibitor of the hepatic VLDL-TG production rate (without affecting the VLDL-apoB production rate). Activates poorly lecithin:cholesterol acyltransferase (LCAT) and does not enhance efflux of cholesterol from macrophages. Binds heparin. The protein is Apolipoprotein A-V (APOA5) of Leptonychotes weddellii (Weddell seal).